A 128-amino-acid chain; its full sequence is MGLMWGLFSVIIASAAQLSMGFAASHLPPMTHLWDFIAALLAFGLDARILLLGLLGYLLSVFCWYKTLHKLALSKAYALLSMSYVLVWIASMVLPGWEGTFSLKALLGVACIMSGLMLIFLPTTKQRY.

At 1-2 (MG) the chain is on the cytoplasmic side. A helical transmembrane segment spans residues 3–23 (LMWGLFSVIIASAAQLSMGFA). At 24–35 (ASHLPPMTHLWD) the chain is on the periplasmic side. The chain crosses the membrane as a helical span at residues 36–56 (FIAALLAFGLDARILLLGLLG). Topologically, residues 57–76 (YLLSVFCWYKTLHKLALSKA) are cytoplasmic. Residues 77–97 (YALLSMSYVLVWIASMVLPGW) traverse the membrane as a helical segment. Residues 98-100 (EGT) are Periplasmic-facing. A helical membrane pass occupies residues 101–121 (FSLKALLGVACIMSGLMLIFL). Residues 122–128 (PTTKQRY) lie on the Cytoplasmic side of the membrane.

The protein belongs to the ArnF family. As to quaternary structure, heterodimer of ArnE and ArnF.

The protein resides in the cell inner membrane. Its pathway is bacterial outer membrane biogenesis; lipopolysaccharide biosynthesis. Its function is as follows. Translocates 4-amino-4-deoxy-L-arabinose-phosphoundecaprenol (alpha-L-Ara4N-phosphoundecaprenol) from the cytoplasmic to the periplasmic side of the inner membrane. This Escherichia coli O45:K1 (strain S88 / ExPEC) protein is Probable 4-amino-4-deoxy-L-arabinose-phosphoundecaprenol flippase subunit ArnF.